A 355-amino-acid polypeptide reads, in one-letter code: Peptide chain release factor 1 (355 aa).

Glutamine 230 is subject to N5-methylglutamine.

This sequence belongs to the prokaryotic/mitochondrial release factor family. Post-translationally, methylated by PrmC. Methylation increases the termination efficiency of RF1.

It localises to the cytoplasm. Functionally, peptide chain release factor 1 directs the termination of translation in response to the peptide chain termination codons UAG and UAA. The sequence is that of Peptide chain release factor 1 from Geobacter metallireducens (strain ATCC 53774 / DSM 7210 / GS-15).